Here is a 269-residue protein sequence, read N- to C-terminus: HTH-type transcriptional activator ArnR1 (269 aa).

The Cytoplasmic segment spans residues 1–217 (MSSMNKRVFD…LLKLTGSYRY (217 aa)). The H-T-H motif DNA-binding region spans 42–65 (TTEISQTINTSRKSIIDAIRKLVD). The helical transmembrane segment at 218–238 (EIALTKVMLFNVISIPVLMYL) threads the bilayer. Topologically, residues 239 to 241 (KDQ) are extracellular. The chain crosses the membrane as a helical span at residues 242-262 (LGILEAIWLYVIILLPLLSIF). Residues 263–269 (AEIFNRI) are Cytoplasmic-facing.

It localises to the cell membrane. Functionally, involved in regulation of archaellar gene expression. May activate flaB transcription upon nutrient starvation by acting on the flaB promoter. The protein is HTH-type transcriptional activator ArnR1 of Sulfolobus acidocaldarius (strain ATCC 33909 / DSM 639 / JCM 8929 / NBRC 15157 / NCIMB 11770).